The sequence spans 122 residues: MPTIQQLVRKGRHDKTAKVATAALKGSPQRRGVCTRVYTTTPKKPNSALRKVARVRLTSGIEVSAYIPGEGHNLQEHSMVLVRGGRVKDLPGVRYKIIRGALDTQGVKDRKQARSRYGAKRG.

This sequence belongs to the universal ribosomal protein uS12 family. In terms of assembly, part of the 30S ribosomal subunit. Contacts proteins S8 and S17. May interact with IF1 in the 30S initiation complex.

Its function is as follows. With S4 and S5 plays an important role in translational accuracy. Functionally, interacts with and stabilizes bases of the 16S rRNA that are involved in tRNA selection in the A site and with the mRNA backbone. Located at the interface of the 30S and 50S subunits, it traverses the body of the 30S subunit contacting proteins on the other side and probably holding the rRNA structure together. The combined cluster of proteins S8, S12 and S17 appears to hold together the shoulder and platform of the 30S subunit. The polypeptide is Small ribosomal subunit protein uS12 (Corynebacterium efficiens (strain DSM 44549 / YS-314 / AJ 12310 / JCM 11189 / NBRC 100395)).